The following is a 362-amino-acid chain: [LysW]-lysine hydrolase (362 aa).

Zn(2+) is bound at residue histidine 69. Residue aspartate 71 is part of the active site. Residue aspartate 94 coordinates Zn(2+). The active-site Proton acceptor is the glutamate 127. The Zn(2+) site is built by glutamate 128, glutamate 151, and histidine 334.

It belongs to the peptidase M20A family. LysK subfamily. Zn(2+) serves as cofactor. Co(2+) is required as a cofactor.

The protein resides in the cytoplasm. It catalyses the reaction [amino-group carrier protein]-C-terminal-gamma-(L-lysyl)-L-glutamate + H2O = [amino-group carrier protein]-C-terminal-L-glutamate + L-lysine. The protein operates within amino-acid biosynthesis; L-lysine biosynthesis via AAA pathway; L-lysine from L-alpha-aminoadipate (Thermus route): step 5/5. In terms of biological role, catalyzes the release of L-lysine from [LysW]-gamma-L-lysine. The sequence is that of [LysW]-lysine hydrolase from Deinococcus radiodurans (strain ATCC 13939 / DSM 20539 / JCM 16871 / CCUG 27074 / LMG 4051 / NBRC 15346 / NCIMB 9279 / VKM B-1422 / R1).